Here is a 116-residue protein sequence, read N- to C-terminus: Proline-rich protein 9 (116 aa).

The protein is Proline-rich protein 9 (Prr9) of Mus musculus (Mouse).